A 407-amino-acid polypeptide reads, in one-letter code: Tryptophan synthase beta chain (407 aa).

K91 carries the post-translational modification N6-(pyridoxal phosphate)lysine.

This sequence belongs to the TrpB family. In terms of assembly, tetramer of two alpha and two beta chains. Pyridoxal 5'-phosphate serves as cofactor.

It carries out the reaction (1S,2R)-1-C-(indol-3-yl)glycerol 3-phosphate + L-serine = D-glyceraldehyde 3-phosphate + L-tryptophan + H2O. Its pathway is amino-acid biosynthesis; L-tryptophan biosynthesis; L-tryptophan from chorismate: step 5/5. In terms of biological role, the beta subunit is responsible for the synthesis of L-tryptophan from indole and L-serine. In Streptococcus pneumoniae (strain 70585), this protein is Tryptophan synthase beta chain.